We begin with the raw amino-acid sequence, 530 residues long: uncharacterized protein (530 aa).

Helical transmembrane passes span 4 to 23, 28 to 47, 57 to 79, 91 to 113, and 148 to 170; these read FLAA…GLAI, LFGV…VVST, FVFQ…PAFF, LFMI…AFGL, and VIGY…AVGA. Residues 260–344 form the RCK C-terminal domain; it reads LGGECDTKIE…MGEVRRFLGD (85 aa). The next 4 helical transmembrane spans lie at 352–374, 379–398, 419–441, and 451–473; these read VNLL…PVPL, TMYL…LGAL, LGLA…QALT, and VGFA…LLKL.

Belongs to the AAE transporter (TC 2.A.81) family.

It localises to the cell membrane. This is an uncharacterized protein from Corynebacterium efficiens (strain DSM 44549 / YS-314 / AJ 12310 / JCM 11189 / NBRC 100395).